A 373-amino-acid chain; its full sequence is XK-related protein 9 (373 aa).

8 helical membrane-spanning segments follow: residues 8–28 (FMMS…DIVL), 38–58 (YVLG…VHCF), 166–186 (MVIM…QIAL), 206–226 (LFYK…LLFV), 230–250 (VALL…FINH), 256–276 (SVSM…FTFF), 295–315 (VLGT…IFNS), and 318–338 (FIPI…FLGV).

The protein belongs to the XK family. In terms of processing, undergoes proteolytic processing by caspase-3 (CASP3), caspase-6 (CASP6) and caspase-7 (CASP7) to generate the XK-related protein 9, processed form, leading to its activation. As to expression, highly expressed in the small intestines; weakly expressed in the pancreas, liver, stomach, and large intestines.

The protein localises to the cell membrane. The catalysed reaction is a 1,2-diacyl-sn-glycero-3-phospho-L-serine(in) = a 1,2-diacyl-sn-glycero-3-phospho-L-serine(out). With respect to regulation, activated upon caspase cleavage to generate the XK-related protein 9, processed form. Does not act prior the onset of apoptosis. Its function is as follows. Phospholipid scramblase that promotes phosphatidylserine exposure on apoptotic cell surface. Phosphatidylserine is a specific marker only present at the surface of apoptotic cells and acts as a specific signal for engulfment. The protein is XK-related protein 9 of Mus musculus (Mouse).